A 113-amino-acid polypeptide reads, in one-letter code: Nucleoid-associated protein Athe_1143 (113 aa).

Belongs to the YbaB/EbfC family. As to quaternary structure, homodimer.

The protein localises to the cytoplasm. It localises to the nucleoid. In terms of biological role, binds to DNA and alters its conformation. May be involved in regulation of gene expression, nucleoid organization and DNA protection. The protein is Nucleoid-associated protein Athe_1143 of Caldicellulosiruptor bescii (strain ATCC BAA-1888 / DSM 6725 / KCTC 15123 / Z-1320) (Anaerocellum thermophilum).